The sequence spans 327 residues: N-acetyl-gamma-glutamyl-phosphate reductase (327 aa).

C136 is a catalytic residue.

The protein belongs to the NAGSA dehydrogenase family. Type 1 subfamily.

The protein localises to the cytoplasm. It catalyses the reaction N-acetyl-L-glutamate 5-semialdehyde + phosphate + NADP(+) = N-acetyl-L-glutamyl 5-phosphate + NADPH + H(+). Its pathway is amino-acid biosynthesis; L-arginine biosynthesis; N(2)-acetyl-L-ornithine from L-glutamate: step 3/4. Catalyzes the NADPH-dependent reduction of N-acetyl-5-glutamyl phosphate to yield N-acetyl-L-glutamate 5-semialdehyde. The sequence is that of N-acetyl-gamma-glutamyl-phosphate reductase from Xylella fastidiosa (strain M23).